We begin with the raw amino-acid sequence, 932 residues long: Lon protease homolog 2, peroxisomal (932 aa).

The region spanning L11–N260 is the Lon N-terminal domain. Positions R298 to D328 are disordered. Over residues N317–D328 the composition is skewed to basic and acidic residues. Position 486-493 (G486–T493) interacts with ATP. The Lon proteolytic domain occupies H729–D916. Residues S822 and K865 contribute to the active site. Positions S930–L932 match the Microbody targeting signal motif.

Belongs to the peptidase S16 family.

Its subcellular location is the peroxisome matrix. The enzyme catalyses Hydrolysis of proteins in presence of ATP.. In terms of biological role, ATP-dependent serine protease that mediates the selective degradation of misfolded and unassembled polypeptides in the peroxisomal matrix. Necessary for type 2 peroxisome targeting signal (PTS2)-containing protein processing and facilitates peroxisome matrix protein import. This Emericella nidulans (strain FGSC A4 / ATCC 38163 / CBS 112.46 / NRRL 194 / M139) (Aspergillus nidulans) protein is Lon protease homolog 2, peroxisomal.